The sequence spans 122 residues: Urease subunit beta (122 aa).

The tract at residues 92 to 122 (GLRPEYAGELDGRGHEPTAPNYGEKGQGHFE) is disordered.

Belongs to the urease beta subunit family. In terms of assembly, heterotrimer of UreA (gamma), UreB (beta) and UreC (alpha) subunits. Three heterotrimers associate to form the active enzyme.

It is found in the cytoplasm. It catalyses the reaction urea + 2 H2O + H(+) = hydrogencarbonate + 2 NH4(+). Its pathway is nitrogen metabolism; urea degradation; CO(2) and NH(3) from urea (urease route): step 1/1. This is Urease subunit beta from Saccharopolyspora erythraea (strain ATCC 11635 / DSM 40517 / JCM 4748 / NBRC 13426 / NCIMB 8594 / NRRL 2338).